A 162-amino-acid chain; its full sequence is Transcription antitermination protein NusB (162 aa).

This sequence belongs to the NusB family.

Functionally, involved in transcription antitermination. Required for transcription of ribosomal RNA (rRNA) genes. Binds specifically to the boxA antiterminator sequence of the ribosomal RNA (rrn) operons. The sequence is that of Transcription antitermination protein NusB from Mycobacterium sp. (strain JLS).